We begin with the raw amino-acid sequence, 2347 residues long: MSEYYFYYKRREKMKKRKRRNFKRFIAAFLVLALIISLVPADVLAKTTEEENGNRIVADDPEETLQKEQTEEAVPFDPKDINKEGEITSERTENTKLYYEGDGVYKQEVYLDPIHTKETPDADWEDISPELKESTSKQVETENAILNSDFQKQMKNGLYATFEHNDHKVTYSLVEAKAPNKTSLTPKDTSADYKTDSNEIVYPDVFPNIDLQTFTFNENIKEDLVLHQYDGYNTFTFQLKTDLQAKEQEDGSIDFSDEKGKVVFSVPKPFMTDSKLDELSGEVERSDKVSYKLEKNEEGYLLHLTADENWLKDPERVYPVSIDPSTSLSVSSDTFVMSAYPTTNYSASSQKWDANLKAYVLKTGYYDKTTGTNYAFMKFNNLKPIQNMTVTKATLKTYVAHSYYGTKATGLWLDTVNSNYDNAKVTWNTKPASKNIGKADVHKGQWASYDVTAAVKSWNSGGANYGFKLHTNGNGKEYWKKLISSANSANKPYIEVTYTIPKGNTPTIKAYHNGDSTGYFDISWKKVEGAKGYKVWIYNGKEYQAISAGNVTSWSTKGKKIWPTSAEIASKRYKLHLDGKDGAELALDPSPVYKNSGGSYATSKNYWIGVSAIFDQGEGAMSAPAKPVIPNVGKAQAPSAKGYNNGNATGYFDLSWKAVSGATGYKVQVFNGKGFETLDLGNQTSWTTKGKKIWPTSAEIKAGKYALHLKDGSGAELPINPGPTYKNAGGDGAKKNYSFKIIAYNKDGEAIASPAANPALPDIARPKNLTGYLYTNTKSSQTGYVNLIWEKVQNAKGYKVNIYNGKEYQSFDVGDADHWTTQNKNIWPTSEEIKAGSYKLHTDGKGGELALDPSPVYNNANGNYKGKKNYSFTLVAYDANGETIPTAPFNPTFHEGAEFLGTEEYWSIIDIPSGQLNGATGNVIVNEEDLSIDGRGPGLGLSRTYNSLDSSDHLFGQGWYADAETSVISTDGGAMYIDEDATTHRFTKKADGTYQPPTGVYLELTETADQFILKTKDQTNAYFNKKGGKLQKVVDGHNNATVYTYNDKNQLTAITDASGRKLTFTYDENGHVTSITGPKNKKVTYSYENDLLKKVTDTDGTVTSYDYDGEGRLVKQYSANSTEAKPVFTEYQYSGHRLEKAINAKKETYVYSYDADKKTLLMTQPNGRKVQYGYNEAGNPIQVIDDAEGLKITTNTKYEGNNVVEDVDPNDVGTGKATESYQYDKDGNVTSVKDAYGTETYEYNKNNDVTKMKDTEGNVTDIAYDGLDAVSETDQSGKSSSAAVYDKYGNQIQSSKDLSASTNILKDGSFEAQKSGWNLTASKDSGKISIITDKSGVLSGSKALEILSQSTSAGTDHGFSSATQTVELEPNTTYTLSGKIKTDLAKTRAYFNIDLRDKDQKRIQWIHNEYSALAGKNDWTKRQITFTTPANAGKAVVYMEVDHNDKDGKGKAWFDEVQLEKGEVSSSYNPVQNSSFTSATENWNVSGASVDSEEGFNDDVSLKAARTSASQAGSVTKQTVVLGQSANDKPVYLTLTGMSKASSVKFTDEKDYSLQANVTYADGSTGVYNAKFPSGTQEWNRAAVVIPKTKPINKVDISILFQKSATGTVWFDDIRLIEGSLLTKSTYDSNGNYVTKEEDELGYATSTDYDETGKKTAETDAKGEKTTYTYDQADQLTNMTLSNGTSILHSYDKEGNEVSKTIRAGADQTYKYEYDVMGKLVKTTDPLGNVLASEYDANSNLTKTISPNGNEVSLSYDGTDRVKSKSYNGTEKYNFTYDKNGNETSVVNKEQNTTKKRTFDNKNRLTELTDRGGSQTWTYPSDSDKLKTFSWTHGDQKGTNQFTYNKLDQMIEMKDSTSSYSFDYDENGNVQTFITGNGGGTSFSYDERNLVSSLHIGDKNGGSILTESYEYDANGNRTTINSSASGKVKYEYGKLNQLVKETHEDGTVIEYTYDGFGNRKTVTTVKDGSSKTVNASFNIMNQLTKVNDESISYDKNGNRTSDGKFTYTWDAEDNLTAVTKKGEDKPFATYKYDEKGNRIQKTVNGKVTNYFYDGDSLNVLYETDADNNVTKSYTYGDSGQLLSYTENGKKYFYHYNAHGDVIAISDSTGKTVAKYQYDAWGNPTKTEASDEVKDNRYRYAGYQYDEETGLYYLMARYYEPRNGVFLSLDPDPGSDGDSLDQNGYTYGNNNPVMNVDPDGHWVWFVVNAGFAVYDGYKAYKSGKGWKGVAVAAASGFVGGGKLKLTKKIGKWATSRHWYKGTFKTKRKSLDYHHNKHIVRNGKSYSKKRYTKVARAFYRSNKHLREKVILATGKKGYRIKNGKRTGYYTRSGKVVTFVNNKWKKKKKR.

Residues 1 to 45 (MSEYYFYYKRREKMKKRKRRNFKRFIAAFLVLALIISLVPADVLA) form the signal peptide. The tract at residues 50–72 (EENGNRIVADDPEETLQKEQTEE) is disordered. YD repeat units follow at residues 1045–1078 (YNDKNQLTAITDASGRKLTFTYDENGHVTSITGP), 1088–1116 (ENDLLKKVTDTDGTVTSYDYDGEGRLVKQ), 1649–1684 (YDETGKKTAETDAKGEKTTYTYDQADQLTNMTLSNG), 1691–1729 (YDKEGNEVSKTIRAGADQTYKYEYDVMGKLVKTTDPLGN), and 2095–2126 (YNAHGDVIAISDSTGKTVAKYQYDAWGNPTKT).

Belongs to the RHS/WapA nuclease family.

It is found in the secreted. Its subcellular location is the cell wall. Functionally, toxic component of a toxin-immunity protein module, which functions as a cellular contact-dependent growth inhibition (CDI) system. A site-specific tRNA(Glu) nuclease, the C-terminus (residues 2214-2346) probably removes 2 or 4 nucleotides from the 3' end of tRNA(Glu) but not tRNA2(Arg) or tRNA3(Ser) (upon expression in E.coli), possibly endonucleolytically. The nuclease activity is neutralized by expression of the cognate immunity protein WapI from the same strain, but not its homolog from 2 other B.subtilis strains. The C-terminus cannot be expressed on its own in E.coli, however it can be cloned in the presence of its cognate immunity protein gene wapI. Cell contact is probably necessary for growth inhibition. The sequence is that of tRNA(Glu)-specific nuclease WapA (wapA) from Bacillus subtilis subsp. natto (strain BEST195).